The chain runs to 966 residues: RNA polymerase-associated protein RapA (966 aa).

The Helicase ATP-binding domain maps to 163 to 337 (EVGQRLHPRV…FARLKLLDAD (175 aa)). Residue 176–183 (DEVGLGKT) coordinates ATP. The short motif at 283–286 (DEAH) is the DEAH box element. Positions 488–642 (RVEWLITFLK…ICPMGMALFE (155 aa)) constitute a Helicase C-terminal domain.

The protein belongs to the SNF2/RAD54 helicase family. RapA subfamily. As to quaternary structure, interacts with the RNAP. Has a higher affinity for the core RNAP than for the holoenzyme. Its ATPase activity is stimulated by binding to RNAP.

Transcription regulator that activates transcription by stimulating RNA polymerase (RNAP) recycling in case of stress conditions such as supercoiled DNA or high salt concentrations. Probably acts by releasing the RNAP, when it is trapped or immobilized on tightly supercoiled DNA. Does not activate transcription on linear DNA. Probably not involved in DNA repair. The polypeptide is RNA polymerase-associated protein RapA (Actinobacillus succinogenes (strain ATCC 55618 / DSM 22257 / CCUG 43843 / 130Z)).